The following is a 168-amino-acid chain: DNA-binding protein inhibitor ID-1 (168 aa).

The bHLH domain maps to 46-98 (LPALLDEQQVNVLLYDMNGCYSRLKELVPTLPQNRKVSKVEILQHVIDYIRDL). The interaction with IFI204 stretch occupies residues 53–106 (QQVNVLLYDMNGCYSRLKELVPTLPQNRKVSKVEILQHVIDYIRDLQLELNSES). The Nuclear export signal motif lies at 91 to 104 (VIDYIRDLQLELNS).

As to quaternary structure, heterodimer with other HLH proteins. Interacts with CLOCK and BMAL1. Interacts with COPS5, IFI204, GATA4 and NKX2-5. In terms of processing, polyubiquitinated; which is favored by Ifi204 and leads to proteasomal degradation.

It is found in the cytoplasm. Its subcellular location is the nucleus. Functionally, transcriptional regulator (lacking a basic DNA binding domain) which negatively regulates the basic helix-loop-helix (bHLH) transcription factors by forming heterodimers and inhibiting their DNA binding and transcriptional activity. Implicated in regulating a variety of cellular processes, including cellular growth, senescence, differentiation, apoptosis, angiogenesis, and neoplastic transformation. Inhibits skeletal muscle and cardiac myocyte differentiation. Regulates the circadian clock by repressing the transcriptional activator activity of the CLOCK-BMAL1 heterodimer. This chain is DNA-binding protein inhibitor ID-1 (Id1), found in Mus musculus (Mouse).